A 161-amino-acid chain; its full sequence is ATP synthase subunit b 1 (161 aa).

The helical transmembrane segment at 3 to 23 (LDATFYALVGLILFFVLIAYL) threads the bilayer.

Belongs to the ATPase B chain family. In terms of assembly, F-type ATPases have 2 components, F(1) - the catalytic core - and F(0) - the membrane proton channel. F(1) has five subunits: alpha(3), beta(3), gamma(1), delta(1), epsilon(1). F(0) has three main subunits: a(1), b(2) and c(10-14). The alpha and beta chains form an alternating ring which encloses part of the gamma chain. F(1) is attached to F(0) by a central stalk formed by the gamma and epsilon chains, while a peripheral stalk is formed by the delta and b chains.

It localises to the cell inner membrane. F(1)F(0) ATP synthase produces ATP from ADP in the presence of a proton or sodium gradient. F-type ATPases consist of two structural domains, F(1) containing the extramembraneous catalytic core and F(0) containing the membrane proton channel, linked together by a central stalk and a peripheral stalk. During catalysis, ATP synthesis in the catalytic domain of F(1) is coupled via a rotary mechanism of the central stalk subunits to proton translocation. In terms of biological role, component of the F(0) channel, it forms part of the peripheral stalk, linking F(1) to F(0). The sequence is that of ATP synthase subunit b 1 from Sinorhizobium medicae (strain WSM419) (Ensifer medicae).